The chain runs to 234 residues: Glucosamine-6-phosphate deaminase (234 aa).

Aspartate 63 acts as the Proton acceptor; for enolization step in catalysis. Catalysis depends on asparagine 129, which acts as the For ring-opening step. Catalysis depends on histidine 131, which acts as the Proton acceptor; for ring-opening step. Glutamate 136 functions as the For ring-opening step in the catalytic mechanism.

It belongs to the glucosamine/galactosamine-6-phosphate isomerase family. NagB subfamily.

The catalysed reaction is alpha-D-glucosamine 6-phosphate + H2O = beta-D-fructose 6-phosphate + NH4(+). The protein operates within amino-sugar metabolism; N-acetylneuraminate degradation; D-fructose 6-phosphate from N-acetylneuraminate: step 5/5. Functionally, catalyzes the reversible isomerization-deamination of glucosamine 6-phosphate (GlcN6P) to form fructose 6-phosphate (Fru6P) and ammonium ion. In Listeria monocytogenes serotype 4b (strain CLIP80459), this protein is Glucosamine-6-phosphate deaminase.